A 193-amino-acid chain; its full sequence is Putative nitroreductase HBN1 (193 aa).

Ser2 is modified (N-acetylserine).

This sequence belongs to the nitroreductase family. Requires FMN as cofactor.

Its subcellular location is the cytoplasm. It localises to the nucleus. This is Putative nitroreductase HBN1 (HBN1) from Saccharomyces cerevisiae (strain ATCC 204508 / S288c) (Baker's yeast).